The following is a 250-amino-acid chain: 5'-nucleotidase SurE (250 aa).

Asp8, Asp9, Ser39, and Asn91 together coordinate a divalent metal cation.

It belongs to the SurE nucleotidase family. A divalent metal cation is required as a cofactor.

Its subcellular location is the cytoplasm. It carries out the reaction a ribonucleoside 5'-phosphate + H2O = a ribonucleoside + phosphate. Its function is as follows. Nucleotidase that shows phosphatase activity on nucleoside 5'-monophosphates. The chain is 5'-nucleotidase SurE from Syntrophotalea carbinolica (strain DSM 2380 / NBRC 103641 / GraBd1) (Pelobacter carbinolicus).